Reading from the N-terminus, the 129-residue chain is Small ribosomal subunit protein uS11 (129 aa).

Belongs to the universal ribosomal protein uS11 family. In terms of assembly, part of the 30S ribosomal subunit. Interacts with proteins S7 and S18. Binds to IF-3.

Located on the platform of the 30S subunit, it bridges several disparate RNA helices of the 16S rRNA. Forms part of the Shine-Dalgarno cleft in the 70S ribosome. In Beijerinckia indica subsp. indica (strain ATCC 9039 / DSM 1715 / NCIMB 8712), this protein is Small ribosomal subunit protein uS11.